A 291-amino-acid polypeptide reads, in one-letter code: 4-hydroxy-tetrahydrodipicolinate synthase (291 aa).

Position 45 (Thr45) interacts with pyruvate. The Proton donor/acceptor role is filled by Tyr133. Lys161 functions as the Schiff-base intermediate with substrate in the catalytic mechanism. Ile203 lines the pyruvate pocket.

The protein belongs to the DapA family. Homotetramer; dimer of dimers.

Its subcellular location is the cytoplasm. The catalysed reaction is L-aspartate 4-semialdehyde + pyruvate = (2S,4S)-4-hydroxy-2,3,4,5-tetrahydrodipicolinate + H2O + H(+). Its pathway is amino-acid biosynthesis; L-lysine biosynthesis via DAP pathway; (S)-tetrahydrodipicolinate from L-aspartate: step 3/4. Functionally, catalyzes the condensation of (S)-aspartate-beta-semialdehyde [(S)-ASA] and pyruvate to 4-hydroxy-tetrahydrodipicolinate (HTPA). This Neisseria meningitidis serogroup C (strain 053442) protein is 4-hydroxy-tetrahydrodipicolinate synthase.